A 421-amino-acid chain; its full sequence is Protein MucB (421 aa).

Residues 2 to 187 (FALIDVNGMY…LPVAEVWGVG (186 aa)) enclose the UmuC domain.

The protein belongs to the DNA polymerase type-Y family.

Its function is as follows. Involved in UV protection and mutation. The polypeptide is Protein MucB (mucB) (Salmonella typhimurium).